A 750-amino-acid polypeptide reads, in one-letter code: Photosystem I P700 chlorophyll a apoprotein A1 (750 aa).

8 consecutive transmembrane segments (helical) span residues 70–93, 156–179, 195–219, 291–309, 346–369, 385–411, 433–455, and 531–549; these read IFSAHFGQLSIIFLWLSGMYFHGA, LYCTAIGALVFAALMLFAGWFHYH, LNHHLAGLLGLGSLSWAGHQVHVSL, IAHHHLAIAILFLIAGHMY, WHAQLSLNLAMLGSLTIVVAHHMY, LSLFTHHMWIGGFLIVGAAAHAAIFMV, AIISHLNWVCIFLGFHSFGLYIH, and FLVHHIHAFTIHVTVLILL. Residues Cys573 and Cys582 each contribute to the [4Fe-4S] cluster site. Transmembrane regions (helical) follow at residues 589–610 and 664–686; these read HVFLGLFWMYNSISVVIFHFSW and LSAYGLLFLGAHFVWAFSLMFLF. His675 is a chlorophyll a' binding site. Residues Met683 and Tyr691 each coordinate chlorophyll a. Trp692 contacts phylloquinone. The chain crosses the membrane as a helical span at residues 724 to 744; it reads AVGVTHYLLGGIATTWAFFLA.

The protein belongs to the PsaA/PsaB family. The PsaA/B heterodimer binds the P700 chlorophyll special pair and subsequent electron acceptors. PSI consists of a core antenna complex that captures photons, and an electron transfer chain that converts photonic excitation into a charge separation. The eukaryotic PSI reaction center is composed of at least 11 subunits. P700 is a chlorophyll a/chlorophyll a' dimer, A0 is one or more chlorophyll a, A1 is one or both phylloquinones and FX is a shared 4Fe-4S iron-sulfur center. is required as a cofactor.

The protein localises to the plastid. It is found in the chloroplast thylakoid membrane. It carries out the reaction reduced [plastocyanin] + hnu + oxidized [2Fe-2S]-[ferredoxin] = oxidized [plastocyanin] + reduced [2Fe-2S]-[ferredoxin]. Its function is as follows. PsaA and PsaB bind P700, the primary electron donor of photosystem I (PSI), as well as the electron acceptors A0, A1 and FX. PSI is a plastocyanin-ferredoxin oxidoreductase, converting photonic excitation into a charge separation, which transfers an electron from the donor P700 chlorophyll pair to the spectroscopically characterized acceptors A0, A1, FX, FA and FB in turn. Oxidized P700 is reduced on the lumenal side of the thylakoid membrane by plastocyanin. This chain is Photosystem I P700 chlorophyll a apoprotein A1, found in Gossypium hirsutum (Upland cotton).